The chain runs to 470 residues: Tigger transposable element-derived protein 3 (470 aa).

The HTH psq-type domain maps to 3–55 (LNTKKKLHALSLAEKIQVLELLDESKMSQSEVARRFQVSQPQISRICKNKEKL). DNA-binding regions (H-T-H motif) lie at residues 31 to 51 (QSEVARRFQVSQPQISRICKN) and 100 to 130 (PMLLHKAKELADIMGQDFVPSIGWLVRWKRR). Residues 67–137 (ERKRKRESKY…KRRNNVGFGT (71 aa)) form the HTH CENPB-type domain. The DDE-1 domain occupies 167-360 (FSPEDVFGCA…VPRQLILSSF (194 aa)). Residues 402 to 421 (DPGPRVCKEETGTEDSGREE) show a composition bias toward basic and acidic residues. Residues 402 to 426 (DPGPRVCKEETGTEDSGREEDGFEP) form a disordered region.

Belongs to the tigger transposable element derived protein family.

Its subcellular location is the nucleus. The protein is Tigger transposable element-derived protein 3 (Tigd3) of Mus musculus (Mouse).